Reading from the N-terminus, the 226-residue chain is Large ribosomal subunit protein uL1 (226 aa).

Belongs to the universal ribosomal protein uL1 family. In terms of assembly, part of the 50S ribosomal subunit.

Functionally, binds directly to 23S rRNA. The L1 stalk is quite mobile in the ribosome, and is involved in E site tRNA release. Protein L1 is also a translational repressor protein, it controls the translation of the L11 operon by binding to its mRNA. This is Large ribosomal subunit protein uL1 from Treponema denticola (strain ATCC 35405 / DSM 14222 / CIP 103919 / JCM 8153 / KCTC 15104).